Here is a 343-residue protein sequence, read N- to C-terminus: MTEIYDFDKSAWDIKGSIAPTQPTTHSEGRLVPQVRVIDPGPGDRKDECLMYMSLLGVVEDSDPLGPPIGRAFGSPPLGVGRSTAKPEELLKEATELDIVVRRTAGLNEKLVFYNNTPLTLPTPWRKVPTTGSVFNANQVCNAVNLTPLDTPQRFRVVYTSITRLSDNGHYTVPRRMLEFRSVNAVAFNLLATLRIDKAIGHGKIIDNAEQLPEATFMVHIGNFRRKKSEVYSADHCKMEIEKMGLVFALGGIGGTSPHIRSTGKMSKTLHAQLGFKKTLCYPLMDINEDLNRLLWRSRCKIARIQAVLQPSVPQEFRIYDDVIINDDQGLFKALQTVVPSNA.

The protein belongs to the morbillivirus/respirovirus/rubulavirus M protein family. As to quaternary structure, homodimer. Dimerization is critical for virion formation. Interacts with host ANP32B.

Its subcellular location is the virion. The protein localises to the host cell membrane. The M protein has a crucial role in virus assembly and interacts with the RNP complex as well as with the viral membrane. Associates with phosphatidylserine (PS) and phosphatidylinositol 4,5-bisphosphate (PIP2) at the plasma membrane. Interaction with PIP2 triggers matrix protein lattice polymerization. Matrix proteins induce host membrane deformation and curvature necessary for virion assembly/budding. In Measles virus (strain Biken) (MeV), this protein is Matrix protein (M).